The primary structure comprises 587 residues: 2-succinyl-5-enolpyruvyl-6-hydroxy-3-cyclohexene-1-carboxylate synthase (587 aa).

Belongs to the TPP enzyme family. MenD subfamily. In terms of assembly, homodimer. Mg(2+) serves as cofactor. Mn(2+) is required as a cofactor. The cofactor is thiamine diphosphate.

The enzyme catalyses isochorismate + 2-oxoglutarate + H(+) = 5-enolpyruvoyl-6-hydroxy-2-succinyl-cyclohex-3-ene-1-carboxylate + CO2. It participates in quinol/quinone metabolism; 1,4-dihydroxy-2-naphthoate biosynthesis; 1,4-dihydroxy-2-naphthoate from chorismate: step 2/7. It functions in the pathway cofactor biosynthesis; phylloquinone biosynthesis. Functionally, catalyzes the thiamine diphosphate-dependent decarboxylation of 2-oxoglutarate and the subsequent addition of the resulting succinic semialdehyde-thiamine pyrophosphate anion to isochorismate to yield 2-succinyl-5-enolpyruvyl-6-hydroxy-3-cyclohexene-1-carboxylate (SEPHCHC). The sequence is that of 2-succinyl-5-enolpyruvyl-6-hydroxy-3-cyclohexene-1-carboxylate synthase from Prochlorococcus marinus (strain MIT 9312).